A 318-amino-acid polypeptide reads, in one-letter code: Methionine import ATP-binding protein MetN (318 aa).

One can recognise an ABC transporter domain in the interval 2 to 237 (IEIKDVGKIF…PEGELKKIIE (236 aa)). Residue 34–41 (GRSGAGKS) coordinates ATP.

This sequence belongs to the ABC transporter superfamily. Methionine importer (TC 3.A.1.24) family. As to quaternary structure, the complex is composed of two ATP-binding proteins (MetN), two transmembrane proteins (MetI) and a solute-binding protein (MetQ).

It is found in the cell membrane. It carries out the reaction L-methionine(out) + ATP + H2O = L-methionine(in) + ADP + phosphate + H(+). It catalyses the reaction D-methionine(out) + ATP + H2O = D-methionine(in) + ADP + phosphate + H(+). Its function is as follows. Part of the ABC transporter complex MetNIQ involved in methionine import. Responsible for energy coupling to the transport system. In Clostridium tetani (strain Massachusetts / E88), this protein is Methionine import ATP-binding protein MetN.